Here is a 219-residue protein sequence, read N- to C-terminus: ATP synthase F(0) complex subunit a (219 aa).

The next 6 helical transmembrane spans lie at 4 to 24, 61 to 81, 90 to 110, 124 to 144, 172 to 192, and 194 to 214; these read PTYL…ILFP, WAAL…LGLL, QLSL…IIGM, EGTP…SLFI, FVLL…LFLL, and LLEI…LSLY.

This sequence belongs to the ATPase A chain family. As to quaternary structure, component of the ATP synthase complex composed at least of ATP5F1A/subunit alpha, ATP5F1B/subunit beta, ATP5MC1/subunit c (homooctomer), MT-ATP6/subunit a, MT-ATP8/subunit 8, ATP5ME/subunit e, ATP5MF/subunit f, ATP5MG/subunit g, ATP5MK/subunit k, ATP5MJ/subunit j, ATP5F1C/subunit gamma, ATP5F1D/subunit delta, ATP5F1E/subunit epsilon, ATP5PF/subunit F6, ATP5PB/subunit b, ATP5PD/subunit d, ATP5PO/subunit OSCP. ATP synthase complex consists of a soluble F(1) head domain (subunits alpha(3) and beta(3)) - the catalytic core - and a membrane F(0) domain - the membrane proton channel (subunits c, a, 8, e, f, g, k and j). These two domains are linked by a central stalk (subunits gamma, delta, and epsilon) rotating inside the F1 region and a stationary peripheral stalk (subunits F6, b, d, and OSCP). Interacts with DNAJC30; interaction is direct.

The protein resides in the mitochondrion inner membrane. The enzyme catalyses H(+)(in) = H(+)(out). Functionally, subunit a, of the mitochondrial membrane ATP synthase complex (F(1)F(0) ATP synthase or Complex V) that produces ATP from ADP in the presence of a proton gradient across the membrane which is generated by electron transport complexes of the respiratory chain. ATP synthase complex consist of a soluble F(1) head domain - the catalytic core - and a membrane F(1) domain - the membrane proton channel. These two domains are linked by a central stalk rotating inside the F(1) region and a stationary peripheral stalk. During catalysis, ATP synthesis in the catalytic domain of F(1) is coupled via a rotary mechanism of the central stalk subunits to proton translocation. With the subunit c (ATP5MC1), forms the proton-conducting channel in the F(0) domain, that contains two crucial half-channels (inlet and outlet) that facilitate proton movement from the mitochondrial intermembrane space (IMS) into the matrix. Protons are taken up via the inlet half-channel and released through the outlet half-channel, following a Grotthuss mechanism. The polypeptide is ATP synthase F(0) complex subunit a (Oncorhynchus masou (Cherry salmon)).